A 479-amino-acid chain; its full sequence is 5-hydroxytryptamine receptor 7 (479 aa).

Residues 1–83 (MMDVNSSGRP…INYGRVEKVV (83 aa)) are Extracellular-facing. N5 and N66 each carry an N-linked (GlcNAc...) asparagine glycan. A helical membrane pass occupies residues 84–108 (IGSILTLITLLTIAGNCLVVISVCF). The Cytoplasmic segment spans residues 109-118 (VKKLRQPSNY). A helical transmembrane segment spans residues 119-140 (LIVSLALADLSVAVAVMPFVSV). Topologically, residues 141 to 152 (TDLIGGKWIFGH) are extracellular. The chain crosses the membrane as a helical span at residues 153–178 (FFCNVFIAMDVMCCTASIMTLCVISI). Residues C155 and C231 are joined by a disulfide bond. D162 lines the serotonin pocket. Residues 179-198 (DRYLGITRPLTYPVRQNGKC) lie on the Cytoplasmic side of the membrane. The chain crosses the membrane as a helical span at residues 199 to 219 (MAKMILSVWLLSASITLPPLF). The Extracellular segment spans residues 220–237 (GWAQNVNDDKVCLISQDF). The chain crosses the membrane as a helical span at residues 238-260 (GYTIYSTAVAFYIPMSVMLFMYY). Over 261–326 (QIYKAARKSA…SIFKREQKAA (66 aa)) the chain is Cytoplasmic. The chain crosses the membrane as a helical span at residues 327–352 (TTLGIIVGAFTVCWLPFFLLSTARPF). The Extracellular portion of the chain corresponds to 353–363 (ICGTSCSCIPL). The helical transmembrane segment at 364 to 387 (WVERTFLWLGYANSLINPFIYAFF) threads the bilayer. Residues 388–479 (NRDLRTTYRS…TVEKKVMIHD (92 aa)) lie on the Cytoplasmic side of the membrane. C401 is lipidated: S-palmitoyl cysteine.

Belongs to the G-protein coupled receptor 1 family. In terms of tissue distribution, predominant isoform in spleen, caudate and hippocampus. Expressed at lower levels. As to expression, minor isoform in terms of expression.

The protein localises to the cell membrane. Functionally, G-protein coupled receptor for 5-hydroxytryptamine (serotonin), a biogenic hormone that functions as a neurotransmitter, a hormone and a mitogen. Ligand binding causes a conformation change that triggers signaling via guanine nucleotide-binding proteins (G proteins) and modulates the activity of downstream effectors. HTR7 is coupled to G(s) G alpha proteins and mediates activation of adenylate cyclase activity. The sequence is that of 5-hydroxytryptamine receptor 7 from Homo sapiens (Human).